The sequence spans 142 residues: Fluoride-specific ion channel FluC 1 (142 aa).

4 consecutive transmembrane segments (helical) span residues 17–37, 42–62, 80–100, and 109–129; these read AWVS…GLAL, GFPF…GFYA, FVMT…LETF, and YIAL…VWLG. Residues Gly87 and Thr90 each coordinate Na(+).

It belongs to the fluoride channel Fluc/FEX (TC 1.A.43) family.

It localises to the cell inner membrane. The enzyme catalyses fluoride(in) = fluoride(out). With respect to regulation, na(+) is not transported, but it plays an essential structural role and its presence is essential for fluoride channel function. Functionally, fluoride-specific ion channel. Important for reducing fluoride concentration in the cell, thus reducing its toxicity. The protein is Fluoride-specific ion channel FluC 1 of Bradyrhizobium diazoefficiens (strain JCM 10833 / BCRC 13528 / IAM 13628 / NBRC 14792 / USDA 110).